The chain runs to 103 residues: Pyrimidine/purine nucleoside phosphorylase (103 aa).

Belongs to the nucleoside phosphorylase PpnP family.

The catalysed reaction is a purine D-ribonucleoside + phosphate = a purine nucleobase + alpha-D-ribose 1-phosphate. It catalyses the reaction adenosine + phosphate = alpha-D-ribose 1-phosphate + adenine. It carries out the reaction cytidine + phosphate = cytosine + alpha-D-ribose 1-phosphate. The enzyme catalyses guanosine + phosphate = alpha-D-ribose 1-phosphate + guanine. The catalysed reaction is inosine + phosphate = alpha-D-ribose 1-phosphate + hypoxanthine. It catalyses the reaction thymidine + phosphate = 2-deoxy-alpha-D-ribose 1-phosphate + thymine. It carries out the reaction uridine + phosphate = alpha-D-ribose 1-phosphate + uracil. The enzyme catalyses xanthosine + phosphate = alpha-D-ribose 1-phosphate + xanthine. Functionally, catalyzes the phosphorolysis of diverse nucleosides, yielding D-ribose 1-phosphate and the respective free bases. Can use uridine, adenosine, guanosine, cytidine, thymidine, inosine and xanthosine as substrates. Also catalyzes the reverse reactions. The sequence is that of Pyrimidine/purine nucleoside phosphorylase from Shewanella baltica (strain OS155 / ATCC BAA-1091).